A 386-amino-acid chain; its full sequence is Synaptotagmin-5 (386 aa).

Pro residues predominate over residues 1 to 16; sequence MFPEPPTPGSPAPETP. Positions 1-21 are disordered; the sequence is MFPEPPTPGSPAPETPPDSSR. Over 1-24 the chain is Vesicular; it reads MFPEPPTPGSPAPETPPDSSRIRQ. Residues 25–45 traverse the membrane as a helical segment; sequence GAVPAWVLATILLGSGLLVFS. Residues 46 to 386 are Cytoplasmic-facing; the sequence is SCFCLYRKRC…PDRARPIPAP (341 aa). C2 domains lie at 108-227 and 239-372; these read QLGR…QAWR and KLGD…AQWH. Residues L138, D139, D145, D197, F198, D199, S202, D205, D270, D276, D330, and D332 each coordinate Ca(2+).

It belongs to the synaptotagmin family. Homodimer. Interacts with both alpha- and beta-tubulin. Ca(2+) serves as cofactor. Expressed in kidney, adipose tissue, lung and heart, as well as at higher levels in brain.

It localises to the cytoplasmic vesicle. The protein resides in the secretory vesicle. The protein localises to the synaptic vesicle membrane. It is found in the recycling endosome membrane. Functionally, may be involved in Ca(2+)-dependent exocytosis of secretory vesicles through Ca(2+) and phospholipid binding to the C2 domain or may serve as Ca(2+) sensors in the process of vesicular trafficking and exocytosis. Regulates the Ca(2+)-dependent secretion of norepinephrine in PC12 cells. Required for export from the endocytic recycling compartment to the cell surface. The protein is Synaptotagmin-5 (Syt5) of Rattus norvegicus (Rat).